Consider the following 273-residue polypeptide: Homeobox protein Nkx-2.2 (273 aa).

Disordered regions lie at residues Met-1 to Val-56 and Ala-91 to Arg-131. Positions Asp-20 to Gly-38 are enriched in acidic residues. A DNA-binding region (homeobox) is located at residues Lys-128 to Arg-187.

Belongs to the NK-2 homeobox family. As to quaternary structure, interacts with OLIG2. As to expression, expressed in restricted areas of the developing CNS: the hindbrain and forebrain, and pancreas.

It localises to the nucleus. Functionally, transcriptional activator involved in the development of insulin-producting beta cells in the endocrine pancreas. May also be involved in specifying diencephalic neuromeric boundaries, and in controlling the expression of genes that play a role in axonal guidance. Binds to elements within the NEUROD1 promoter. The sequence is that of Homeobox protein Nkx-2.2 (Nkx2-2) from Mus musculus (Mouse).